A 512-amino-acid chain; its full sequence is Matrix metalloproteinase-27 (512 aa).

An N-terminal signal peptide occupies residues M1–A17. Positions L18–Q98 are cleaved as a propeptide — activation peptide. Residues P89–V96 carry the Cysteine switch motif. C91 is a binding site for Zn(2+). The N-linked (GlcNAc...) asparagine glycan is linked to N110. Residues D121 and D155 each contribute to the Ca(2+) site. Residue H165 coordinates Zn(2+). Positions 173, 174, and 178 each coordinate Ca(2+). H181 lines the Zn(2+) pocket. 2 residues coordinate Ca(2+): G188 and D192. Residue H194 coordinates Zn(2+). Residues D196 and E199 each coordinate Ca(2+). H216 contributes to the Zn(2+) binding site. The active site involves E217. Positions 220 and 226 each coordinate Zn(2+). Hemopexin repeat units follow at residues P276 to L325, P326 to R371, V373 to I421, and G422 to C465. Cysteines 279 and 465 form a disulfide. Residue D286 participates in Ca(2+) binding. The Ca(2+) site is built by D377 and D426. The tract at residues K466–Y512 is required for retention in the endoplasmic reticulum.

Belongs to the peptidase M10A family. Ca(2+) is required as a cofactor. It depends on Zn(2+) as a cofactor. N-glycosylated.

The protein localises to the endoplasmic reticulum. Matrix metalloproteinases degrade protein components of the extracellular matrix such as fibronectin, laminin, gelatins and/or collagens. In Tupaia belangeri (Common tree shrew), this protein is Matrix metalloproteinase-27 (MMP27).